The primary structure comprises 89 residues: Large ribosomal subunit protein uL23cz/uL23cy (89 aa).

This sequence belongs to the universal ribosomal protein uL23 family. Part of the 50S ribosomal subunit.

The protein localises to the plastid. Its subcellular location is the chloroplast. Binds to 23S rRNA. In Pelargonium hortorum (Common geranium), this protein is Large ribosomal subunit protein uL23cz/uL23cy (rpl23-A).